Here is a 431-residue protein sequence, read N- to C-terminus: 23S rRNA (uracil(1939)-C(5))-methyltransferase RlmD (431 aa).

A TRAM domain is found at 10–68; that stretch reads RVTTRQIITVKVNDLDSFGQGVARHNGKALFIPGLLPEESAEVIITEDKKQFARARVSR. [4Fe-4S] cluster contacts are provided by C81, C87, C90, and C161. Residues Q264, F293, N298, E314, N341, and D362 each contribute to the S-adenosyl-L-methionine site. C388 serves as the catalytic Nucleophile.

This sequence belongs to the class I-like SAM-binding methyltransferase superfamily. RNA M5U methyltransferase family. RlmD subfamily.

The enzyme catalyses uridine(1939) in 23S rRNA + S-adenosyl-L-methionine = 5-methyluridine(1939) in 23S rRNA + S-adenosyl-L-homocysteine + H(+). In terms of biological role, catalyzes the formation of 5-methyl-uridine at position 1939 (m5U1939) in 23S rRNA. This chain is 23S rRNA (uracil(1939)-C(5))-methyltransferase RlmD, found in Salmonella paratyphi A (strain ATCC 9150 / SARB42).